A 499-amino-acid polypeptide reads, in one-letter code: MLHRRIHFKSQSTLDFDSVAVSISASTMKNELDKLVLNSRVSDKKTFGIQMDNFFALYRRYLLHTVKGYECDWDSIRPLGPEDMIDYGDLPLCKNAGKYLNRLAVVKLNGGMGNALGVNYPKAMIEVRDNQSFLDLSIRQIEYLNRRYDVSVPFILMNSYDTNDETCKVLRKYAGCKIDISTFEQSRYPRVFVDSQLPVPKAAPSPIEEWYPPGHGDIFDALVHSGTIERLLAQGKDYLFVSNIDNLGASVDLNILSHVIDNQIEYSMEITDKTKADIKVGILVNQDGLLRLLETNQVPEQHREEFMSDKVFKYINTNNVWLYLPAVKRVVENRELNLDIMPNIETVYYNNEPARIIEFTTAIGSAISQFKKTEGIRVSRPRFISVKNSSDLFLVRCDLYNVDHGSLKIEESRLGFPPPVVRMSNEFKDIAELFCRIPYMPSMKDLVSLSISGNVYFGRNVILKGNIVIVASENTILCIPSNAVLENCVVTGNCKIMEC.

UTP is bound by residues 108–111 (LNGG), Lys-122, Gln-185, and Gly-214. 110 to 111 (GG) is a substrate binding site. Residues His-215 and 243–245 (NID) contribute to the substrate site. Residues Asp-245 and Lys-387 each coordinate UTP.

The protein belongs to the UDPGP type 1 family.

Its subcellular location is the cytoplasm. The protein resides in the nucleus. The enzyme catalyses alpha-D-glucose 1-phosphate + UTP + H(+) = UDP-alpha-D-glucose + diphosphate. Plays a central role as a glucosyl donor in cellular metabolic pathways. In Schizosaccharomyces pombe (strain 972 / ATCC 24843) (Fission yeast), this protein is Probable UTP--glucose-1-phosphate uridylyltransferase.